Consider the following 263-residue polypeptide: uncharacterized protein (263 aa).

31 to 38 provides a ligand contact to ATP; it reads GPTGSGKT.

The protein belongs to the CbbQ/NirQ/NorQ/GpvN family.

This is an uncharacterized protein from Staphylococcus haemolyticus (strain JCSC1435).